The primary structure comprises 200 residues: Recombination protein RecR (200 aa).

The C4-type zinc finger occupies 57–72 (CNECRTFTEEDVCHIC). In terms of domain architecture, Toprim spans 81–176 (GLLCVVESPA…DASRIAHGVP (96 aa)).

This sequence belongs to the RecR family.

May play a role in DNA repair. It seems to be involved in an RecBC-independent recombinational process of DNA repair. It may act with RecF and RecO. The polypeptide is Recombination protein RecR (Vibrio vulnificus (strain CMCP6)).